Here is a 506-residue protein sequence, read N- to C-terminus: Anaerobic nitric oxide reductase transcription regulator NorR (506 aa).

Asp-57 carries the post-translational modification 4-aspartylphosphate. Residues 187-416 form the Sigma-54 factor interaction domain; the sequence is MIGLSPAMTQ…LEHAIHRAVV (230 aa). ATP is bound by residues 215–222 and 278–287; these read GETGTGKE and ADNGTLFLDE. Residues 481–500 constitute a DNA-binding region (H-T-H motif); sequence WAASARALETDVANLHRLAK.

Its pathway is nitrogen metabolism; nitric oxide reduction. Required for the expression of anaerobic nitric oxide (NO) reductase, acts as a transcriptional activator for at least the norVW operon. Activation also requires sigma-54. The sequence is that of Anaerobic nitric oxide reductase transcription regulator NorR from Salmonella arizonae (strain ATCC BAA-731 / CDC346-86 / RSK2980).